The sequence spans 427 residues: Diaminobutyrate--2-oxoglutarate transaminase (427 aa).

K264 is modified (N6-(pyridoxal phosphate)lysine).

It belongs to the class-III pyridoxal-phosphate-dependent aminotransferase family. Requires pyridoxal 5'-phosphate as cofactor.

The enzyme catalyses L-2,4-diaminobutanoate + 2-oxoglutarate = L-aspartate 4-semialdehyde + L-glutamate. Its pathway is amine and polyamine biosynthesis; ectoine biosynthesis; L-ectoine from L-aspartate 4-semialdehyde: step 1/3. In terms of biological role, catalyzes reversively the conversion of L-aspartate beta-semialdehyde (ASA) to L-2,4-diaminobutyrate (DABA) by transamination with L-glutamate. This is Diaminobutyrate--2-oxoglutarate transaminase (ectB) from Wolinella succinogenes (strain ATCC 29543 / DSM 1740 / CCUG 13145 / JCM 31913 / LMG 7466 / NCTC 11488 / FDC 602W) (Vibrio succinogenes).